The following is a 182-amino-acid chain: Adenine phosphoribosyltransferase (182 aa).

The protein belongs to the purine/pyrimidine phosphoribosyltransferase family. As to quaternary structure, homodimer.

The protein resides in the cytoplasm. It catalyses the reaction AMP + diphosphate = 5-phospho-alpha-D-ribose 1-diphosphate + adenine. The protein operates within purine metabolism; AMP biosynthesis via salvage pathway; AMP from adenine: step 1/1. Functionally, catalyzes a salvage reaction resulting in the formation of AMP, that is energically less costly than de novo synthesis. The chain is Adenine phosphoribosyltransferase from Bordetella avium (strain 197N).